Consider the following 709-residue polypeptide: MARATPLNRYRNIGISAHIDAGKTTTTERILFYTGVSHKIGETHEGSATMDWMEQEQERGITITSAATTCFWSGMGQQFPQHRINIIDTPGHVDFTIEVERSMRVLDGACMVYCAVGGVQPQSETVWRQANKYKVPRLAFVNKMDRVGADFYRVKEQVKTRLGGNPVAMVIPIGKEDDFEGVIDLITMKAIYWDVESLGMKFEEREIPEELQEKAEEYRSELVEVAAEANEDLMNKYLEGEELTEDEIHAAIRQRTINNEIIPMYCGTAFKNKGVQKMLDAVIQYMPAPQDVPAIKGILDDKAETEGTREASDDAPFAALAFKIMNDKFVGNLTFVRVYSGVIKQGESVYNPVKMKRERIGRIVQMHADSQQELDEIRAGDIAALVGMKDVGTGDTLCDEKEIITLERMEFPEPVISLAVEPKTKADQEKMSIALGRLAKEDPSFRVHTDEESGQTIISGMGELHLEILVDRMKREFKVEANIGAPQVAYRETIRGTVEQEGKFVRQTGGRGKFGHVWLKLEPLDLDSGVDYQFEEQVVGGVVPKEYHGAVDKGIQERMKNGILAGYPIVGVKATLYDGSYHDVDSDELSFKMAGSIAFKKGFMNANPVLLEPVMKVEVETPEEYMGDIMGDLNRRRGMVQGMDDLPGGTKQIRAEVPLAEMFGYATNVRSMSQGRATYSMEFQKYAETPKSVAEEIMKKFSGKDDDEE.

Positions 8-290 constitute a tr-type G domain; that stretch reads NRYRNIGISA…AVIQYMPAPQ (283 aa). GTP is bound by residues 17–24, 88–92, and 142–145; these read AHIDAGKT, DTPGH, and NKMD.

It belongs to the TRAFAC class translation factor GTPase superfamily. Classic translation factor GTPase family. EF-G/EF-2 subfamily.

Its subcellular location is the cytoplasm. In terms of biological role, catalyzes the GTP-dependent ribosomal translocation step during translation elongation. During this step, the ribosome changes from the pre-translocational (PRE) to the post-translocational (POST) state as the newly formed A-site-bound peptidyl-tRNA and P-site-bound deacylated tRNA move to the P and E sites, respectively. Catalyzes the coordinated movement of the two tRNA molecules, the mRNA and conformational changes in the ribosome. The chain is Elongation factor G from Psychrobacter sp. (strain PRwf-1).